The sequence spans 225 residues: Probable manganese catalase (225 aa).

Residue E37 coordinates Mn(2+). 2 residues coordinate Ca(2+): D58 and D62. 4 residues coordinate Mn(2+): E67, H70, E138, and H171. A Ca(2+)-binding site is contributed by S204. The segment at S204 to R225 is disordered. The segment covering P213–R225 has biased composition (polar residues).

It belongs to the manganese catalase family. Ca(2+) serves as cofactor. The cofactor is Mn(2+).

It catalyses the reaction 2 H2O2 = O2 + 2 H2O. In terms of biological role, catalyzes the decomposition of hydrogen peroxide into water and oxygen. The sequence is that of Probable manganese catalase from Clostridium acetobutylicum (strain ATCC 824 / DSM 792 / JCM 1419 / IAM 19013 / LMG 5710 / NBRC 13948 / NRRL B-527 / VKM B-1787 / 2291 / W).